Here is a 787-residue protein sequence, read N- to C-terminus: Integrin beta-6 (787 aa).

An N-terminal signal peptide occupies residues 1–21 (MGIELLCLFFLFLGRNDHVQG). Residues 22–71 (GCAMGGAETCEDCLLIGPQCAWCSQENFTHLSGVGERCDTPANLLAKGCQ) form the PSI domain. Over 22–708 (GCAMGGAETC…KDCPKPPNIP (687 aa)) the chain is Extracellular. 19 cysteine pairs are disulfide-bonded: Cys-23/Cys-41, Cys-31/Cys-454, Cys-34/Cys-59, Cys-44/Cys-70, Cys-197/Cys-204, Cys-252/Cys-293, Cys-394/Cys-406, Cys-426/Cys-452, Cys-456/Cys-476, Cys-467/Cys-479, Cys-481/Cys-490, Cys-492/Cys-519, Cys-502/Cys-517, Cys-511/Cys-522, Cys-524/Cys-537, Cys-539/Cys-560, Cys-544/Cys-558, Cys-552/Cys-563, and Cys-565/Cys-574. Residues Asn-48 and Asn-97 are each glycosylated (N-linked (GlcNAc...) asparagine). A VWFA domain is found at 131–371 (YPVDLYYLMD…QLIISAYEEL (241 aa)). Positions 140, 142, and 144 each coordinate Mg(2+). Positions 144, 147, 148, and 179 each coordinate Ca(2+). Positions 235, 237, 239, and 240 each coordinate Ca(2+). Mg(2+) is bound at residue Glu-240. The N-linked (GlcNAc...) asparagine glycan is linked to Asn-260. Positions 271 and 355 each coordinate Ca(2+). Residue Asn-387 is glycosylated (N-linked (GlcNAc...) asparagine). A glycan (N-linked (GlcNAc...) asparagine) is linked at Asn-418. I-EGF domains lie at 456–491 (CQKE…HHCE), 492–538 (CGED…PYCQ), 539–575 (CDNF…EYCN), and 576–615 (CTTS…PACE). N-linked (GlcNAc...) asparagine glycans are attached at residues Asn-463 and Asn-471. A glycan (N-linked (GlcNAc...) asparagine) is linked at Asn-541. Asn-575 is a glycosylation site (N-linked (GlcNAc...) asparagine). Cystine bridges form between Cys-576-Cys-599, Cys-583-Cys-597, Cys-591-Cys-602, Cys-604-Cys-614, Cys-617-Cys-620, Cys-624-Cys-670, Cys-630-Cys-649, Cys-633-Cys-645, and Cys-678-Cys-701. A helical transmembrane segment spans residues 709–729 (MIMLGVSLAILLIGVALLCIW). Residues 730–757 (KLLVSFHDRKEVAKFEAERSKAKWQTGT) form an interaction with HAX1 region. At 730-787 (KLLVSFHDRKEVAKFEAERSKAKWQTGTNPLYRGSTSTFKNVTYKHKEKQKVDLSTDG) the chain is on the cytoplasmic side.

Belongs to the integrin beta chain family. As to quaternary structure, heterodimer of an alpha and a beta subunit. Interacts with FLNB. Interacts with HAX1. ITGAV:ITGB6 interacts with FBN1. ITGAV:ITGB6 interacts with TGFB1.

It is found in the cell membrane. Its subcellular location is the cell junction. It localises to the focal adhesion. Its function is as follows. Integrin alpha-V:beta-6 (ITGAV:ITGB6) is a receptor for fibronectin and cytotactin. It recognizes the sequence R-G-D in its ligands. ITGAV:ITGB6 acts as a receptor for fibrillin-1 (FBN1) and mediates R-G-D-dependent cell adhesion to FBN1. Integrin alpha-V:beta-6 (ITGAV:ITGB6) mediates R-G-D-dependent release of transforming growth factor beta-1 (TGF-beta-1) from regulatory Latency-associated peptide (LAP), thereby playing a key role in TGF-beta-1 activation. The sequence is that of Integrin beta-6 (ITGB6) from Ovis aries (Sheep).